A 625-amino-acid chain; its full sequence is tRNA uridine 5-carboxymethylaminomethyl modification enzyme MnmG (625 aa).

Residues 16-21, Ile-128, and Ser-183 contribute to the FAD site; that span reads GGGHAG. 275 to 289 contributes to the NAD(+) binding site; sequence GPRYCPSIEDKVVRF. Gln-372 lines the FAD pocket.

It belongs to the MnmG family. Homodimer. Heterotetramer of two MnmE and two MnmG subunits. Requires FAD as cofactor.

The protein resides in the cytoplasm. Functionally, NAD-binding protein involved in the addition of a carboxymethylaminomethyl (cmnm) group at the wobble position (U34) of certain tRNAs, forming tRNA-cmnm(5)s(2)U34. This chain is tRNA uridine 5-carboxymethylaminomethyl modification enzyme MnmG, found in Protochlamydia amoebophila (strain UWE25).